The sequence spans 406 residues: Inner kinetochore subunit OKP1 (406 aa).

Disordered stretches follow at residues 1-37 (MAADRDNFLQNIENDSINNGQAMDLSPNRSSSESDSS) and 59-122 (TQSK…TSGE). Residues 8-21 (FLQNIENDSINNGQ) are compositionally biased toward polar residues. Residues 26 to 37 (SPNRSSSESDSS) show a composition bias toward low complexity. A compositionally biased stretch (acidic residues) spans 69–78 (NSDDAEEGEI). At serine 70 the chain carries Phosphoserine. Composition is skewed to basic and acidic residues over residues 79-89 (EERTNKEEGQY) and 97-106 (LRFEVGKEST). The span at 107 to 122 (GKLQSHLSDGSATSGE) shows a compositional bias: polar residues. Positions 239-285 (SKRQFIQNRYSQELQNNERLEAILSREQNLLEETRKLCMNLKTNNKK) form a coiled coil. Positions 317-340 (MHPDGPVTFRNDSHELNLMLNDPI) are CTF19-MCM21 binding motif. The interaction with NKP1-NKP2 stretch occupies residues 353-400 (VLSLLPSLKEYTKKSKELKETMGQMISDSHEEEIKEVFVPHHESHQDK). Residues 379-406 (SDSHEEEIKEVFVPHHESHQDKTEEDIH) form a disordered region. The segment covering 380 to 406 (DSHEEEIKEVFVPHHESHQDKTEEDIH) has biased composition (basic and acidic residues).

The protein belongs to the CENP-Q/OKP1 family. As to quaternary structure, component of the heterotetrameric kinetochore subcomplex COMA, which consists of AME1, CTF19, MCM21 and OKP1. The COMA subcomplex is part of a larger constitutive centromere-associated network (CCAN) (also known as central kinetochore CTF19 complex in yeast), which is composed of at least AME1, CHL4, CNN1, CTF3, CTF19, IML3, MCM16, MCM21, MCM22, MHF1, MHF2, MIF2, NKP1, NKP2, OKP1 and WIP1. COMA binds the centromeric nucleosome-binding protein MIF2, and to the outer kinetochore MIND subcomplex. OKP1 interacts directly with AME1, with an NKP1-NKP2 dimer, and with CTF19-MCM21.

It localises to the nucleus. The protein localises to the chromosome. Its subcellular location is the centromere. It is found in the kinetochore. Its function is as follows. Component of the kinetochore, a multiprotein complex that assembles on centromeric DNA and attaches chromosomes to spindle microtubules, mediating chromosome segregation and sister chromatid segregation during meiosis and mitosis. Component of the inner kinetochore COMA complex, which connects centromere-associated proteins and the outer kinetochore. COMA interacts with other inner kinetochore proteins to form the inner kinetochore constitutive centromere-associated network (CCAN), which serves as a structural platform for outer kinetochore assembly. In Saccharomyces cerevisiae (strain ATCC 204508 / S288c) (Baker's yeast), this protein is Inner kinetochore subunit OKP1.